We begin with the raw amino-acid sequence, 66 residues long: U10-theraphotoxin-Cg1a 1 (66 aa).

The first 21 residues, 1 to 21 (MKTSVLFVIFGLALLFCLSFA), serve as a signal peptide directing secretion. The propeptide occupies 22-29 (AELEDTGR). 3 disulfide bridges follow: Cys-31–Cys-46, Cys-38–Cys-51, and Cys-45–Cys-58.

This sequence belongs to the neurotoxin 10 (Hwtx-1) family. 29 (Jztx-13) subfamily. As to expression, expressed by the venom gland.

It is found in the secreted. In terms of biological role, probable ion channel inhibitor. The sequence is that of U10-theraphotoxin-Cg1a 1 from Chilobrachys guangxiensis (Chinese earth tiger tarantula).